The primary structure comprises 207 residues: Ribonuclease HII (207 aa).

Residues 12-201 (DLVAGVDEVG…VRAAWEVREG (190 aa)) enclose the RNase H type-2 domain. Residues D18, E19, and D110 each coordinate a divalent metal cation.

The protein belongs to the RNase HII family. Mn(2+) is required as a cofactor. Mg(2+) serves as cofactor.

The protein resides in the cytoplasm. It carries out the reaction Endonucleolytic cleavage to 5'-phosphomonoester.. Endonuclease that specifically degrades the RNA of RNA-DNA hybrids. This is Ribonuclease HII from Pseudomonas putida (strain ATCC 700007 / DSM 6899 / JCM 31910 / BCRC 17059 / LMG 24140 / F1).